The following is a 590-amino-acid chain: Phenylalanine--tRNA ligase beta subunit (590 aa).

A B5 domain is found at 276-382 (MELDVWDVPV…IMYNYDRFEP (107 aa)). Asn-360, Asp-366, Glu-369, and Asp-370 together coordinate Mg(2+).

The protein belongs to the phenylalanyl-tRNA synthetase beta subunit family. Type 2 subfamily. As to quaternary structure, tetramer of two alpha and two beta subunits. The cofactor is Mg(2+).

The protein localises to the cytoplasm. The catalysed reaction is tRNA(Phe) + L-phenylalanine + ATP = L-phenylalanyl-tRNA(Phe) + AMP + diphosphate + H(+). The sequence is that of Phenylalanine--tRNA ligase beta subunit from Methanopyrus kandleri (strain AV19 / DSM 6324 / JCM 9639 / NBRC 100938).